The chain runs to 152 residues: Ribosomal RNA large subunit methyltransferase H (152 aa).

S-adenosyl-L-methionine is bound by residues leucine 68, glycine 100, and phenylalanine 119 to tryptophan 124.

Belongs to the RNA methyltransferase RlmH family. Homodimer.

It localises to the cytoplasm. It carries out the reaction pseudouridine(1915) in 23S rRNA + S-adenosyl-L-methionine = N(3)-methylpseudouridine(1915) in 23S rRNA + S-adenosyl-L-homocysteine + H(+). Specifically methylates the pseudouridine at position 1915 (m3Psi1915) in 23S rRNA. The chain is Ribosomal RNA large subunit methyltransferase H from Paramagnetospirillum magneticum (strain ATCC 700264 / AMB-1) (Magnetospirillum magneticum).